The primary structure comprises 458 residues: Ammonium transporter Rh type B (458 aa).

The Cytoplasmic segment spans residues 1–13; sequence MAGSSRRAGGRRL. The chain crosses the membrane as a helical span at residues 14 to 34; sequence QLPLLCLLLQGATAILFAVFV. Residues 35–61 are Extracellular-facing; it reads RYNHETDAALWHWGNHSNPDNEFYFRY. An N-linked (GlcNAc...) asparagine glycan is attached at asparagine 49. Residues 62-82 form a helical membrane-spanning segment; sequence PSFQDVHTMIFVGFGFLMAFL. Topologically, residues 83 to 86 are cytoplasmic; it reads QRYG. The helical transmembrane segment at 87-107 threads the bilayer; sequence FSSVGFTFLLAAFALQWSTLV. At 108–124 the chain is on the extracellular side; sequence QGFLHTFHGGHIHIGVE. Residues 125–145 traverse the membrane as a helical segment; that stretch reads SMINADFCAGAVLISFGAILG. Residues 146–149 are Cytoplasmic-facing; sequence KTGP. The helical transmembrane segment at 150-170 threads the bilayer; sequence AQLLLMALLEVVLFGLNEFVL. The Extracellular portion of the chain corresponds to 171-178; sequence LSLLGVKD. The helical transmembrane segment at 179–201 threads the bilayer; sequence AGGSMTIHTFGAYFGLVLSRVLY. The Cytoplasmic portion of the chain corresponds to 202 to 219; it reads RPQLEKSKHRQSSVYHSD. Residues 220–240 traverse the membrane as a helical segment; sequence LFAMIGTIFLWIFWPSFNSAP. Over 241 to 251 the chain is Extracellular; it reads TPLGDGQHRTA. The helical transmembrane segment at 252 to 272 threads the bilayer; the sequence is LNTYYSLTASTLSTFALSALV. The Cytoplasmic segment spans residues 273–282; that stretch reads GRDGRLDMVH. The chain crosses the membrane as a helical span at residues 283 to 303; sequence VQNAALAGGVVVGTSAEMMLT. A topological domain (extracellular) is located at residue proline 304. The helical transmembrane segment at 305–325 threads the bilayer; sequence FGALAAGFLAGTVSTLGFKFF. Residues 326–346 are Cytoplasmic-facing; the sequence is TPILESKFKIQDTCGVHNLHG. Residues 347 to 367 form a helical membrane-spanning segment; sequence MPGVLGALLGVLVAGLATHDS. Residues 368–393 are Extracellular-facing; sequence YGEGLESVFPLIAEGQRSSTSQALHQ. A helical membrane pass occupies residues 394–414; the sequence is LFGLFVTLIFASVGGGLGGLL. The Cytoplasmic portion of the chain corresponds to 415 to 458; that stretch reads LRLPFLDSPPDSQCYEDQIYWEVPEEHADLAQGSLRPEEPDTQA. Positions 416–424 are interaction with ANK3; sequence RLPFLDSPP. Residues 429 to 432 carry the Basolateral sorting signal motif; the sequence is YEDQ.

This sequence belongs to the ammonium transporter (TC 2.A.49) family. Rh subfamily. In terms of assembly, interacts (via C-terminus) with ANK2 and ANK3; required for targeting to the basolateral membrane. N-glycosylated.

It is found in the cell membrane. The protein localises to the basolateral cell membrane. It catalyses the reaction NH4(+)(in) = NH4(+)(out). The catalysed reaction is methylamine(out) = methylamine(in). The enzyme catalyses CO2(out) = CO2(in). Its function is as follows. Ammonium transporter involved in the maintenance of acid-base homeostasis. Transports ammonium and its related derivative methylammonium across the basolateral plasma membrane of epithelial cells likely contributing to renal transepithelial ammonia transport and ammonia metabolism. May transport either NH4(+) or NH3 ammonia species predominantly mediating an electrogenic NH4(+) transport. May act as a CO2 channel providing for renal acid secretion. This is Ammonium transporter Rh type B (RHBG) from Sus scrofa (Pig).